Consider the following 228-residue polypeptide: L-ribulose-5-phosphate 4-epimerase UlaF (228 aa).

Substrate contacts are provided by residues 26–27 (GN), 43–44 (SG), and 72–73 (SS). The Zn(2+) site is built by D74, H93, and H95. The active-site Proton donor/acceptor is the D118. Residue H167 coordinates Zn(2+). Y225 acts as the Proton donor/acceptor in catalysis.

Belongs to the aldolase class II family. AraD/FucA subfamily. Zn(2+) is required as a cofactor.

It catalyses the reaction L-ribulose 5-phosphate = D-xylulose 5-phosphate. Its pathway is cofactor degradation; L-ascorbate degradation; D-xylulose 5-phosphate from L-ascorbate: step 4/4. Functionally, catalyzes the isomerization of L-ribulose 5-phosphate to D-xylulose 5-phosphate. Is involved in the anaerobic L-ascorbate utilization. The sequence is that of L-ribulose-5-phosphate 4-epimerase UlaF from Shigella boydii serotype 18 (strain CDC 3083-94 / BS512).